The following is a 262-amino-acid chain: Apolipoprotein A-I-1 (262 aa).

The N-terminal stretch at 1 to 18 is a signal peptide; sequence MKFLALALTILLAAGTQA. Residues 32–63 are 3 X approximate tandem repeats; the sequence is VKAALSMYIAQVKLTAQRSIDLLDDTEYKEYK. 2 consecutive repeat copies span residues 64-85 and 87-107. The tract at residues 64-262 is 10 X approximate tandem repeats; sequence MQLTQSLDNL…YETISQAMKA (199 aa). One copy of the 3; half-length repeat lies at 108 to 118; sequence KDVEELRSQLE. 5 repeat units span residues 119 to 140, 141 to 162, 163 to 184, 185 to 206, and 207 to 228. Residues 229 to 239 form a 9; half-length repeat; the sequence is PLSEDFKGQVG. Repeat unit 10 spans residues 240 to 262; it reads PAAEQAKQKLLAFYETISQAMKA.

This sequence belongs to the apolipoprotein A1/A4/E family.

It localises to the secreted. Functionally, participates in the reverse transport of cholesterol from tissues to the liver for excretion by promoting cholesterol efflux from tissues and by acting as a cofactor for the lecithin cholesterol acyltransferase (LCAT). The sequence is that of Apolipoprotein A-I-1 from Oncorhynchus mykiss (Rainbow trout).